Reading from the N-terminus, the 357-residue chain is Poly(3-hydroxyalkanoate) polymerase subunit PhaE (357 aa).

A disordered region spans residues 320–357 (AALAGEEPATKPATALRSPAPAAKAPARRRTTKTNPAD). Residues 331–344 (PATALRSPAPAAKA) show a composition bias toward low complexity.

The protein belongs to the PHA/PHB synthase family. Type III PhaE subfamily. In terms of assembly, a large complex of PhaC and PhaE; the ratio of the subunits has been estimated to be from 1:1 to 4:1, with more PhaE than PhaC.

The protein resides in the cytoplasm. It participates in biopolymer metabolism; poly-(R)-3-hydroxybutanoate biosynthesis. In terms of biological role, polymerizes D(-)-3-hydroxybutyryl-CoA to create polyhydroxybutyrate (PHB) which consists of thousands of hydroxybutyrate molecules linked end to end. This subunit has no catalytic activity but enhances the activity of PhaC, the catalytic subunit, 100-fold. This is Poly(3-hydroxyalkanoate) polymerase subunit PhaE from Allochromatium vinosum (strain ATCC 17899 / DSM 180 / NBRC 103801 / NCIMB 10441 / D) (Chromatium vinosum).